Reading from the N-terminus, the 396-residue chain is Ribosomal RNA large subunit methyltransferase I (396 aa).

The 78-residue stretch at 2–79 (AIRIKLKPGR…REEEIDREFF (78 aa)) folds into the PUA domain.

Belongs to the methyltransferase superfamily. RlmI family.

Its subcellular location is the cytoplasm. It carries out the reaction cytidine(1962) in 23S rRNA + S-adenosyl-L-methionine = 5-methylcytidine(1962) in 23S rRNA + S-adenosyl-L-homocysteine + H(+). Specifically methylates the cytosine at position 1962 (m5C1962) of 23S rRNA. The chain is Ribosomal RNA large subunit methyltransferase I from Shewanella baltica (strain OS155 / ATCC BAA-1091).